We begin with the raw amino-acid sequence, 226 residues long: Pyridoxal 5'-phosphate synthase subunit Pdx2 (226 aa).

52–54 (GES) lines the L-glutamine pocket. The Nucleophile role is filled by Cys87. L-glutamine contacts are provided by residues Arg124 and 156-157 (IR). Catalysis depends on charge relay system residues His199 and Glu201.

The protein belongs to the glutaminase PdxT/SNO family. In terms of assembly, in the presence of PdxS, forms a dodecamer of heterodimers. Only shows activity in the heterodimer.

The catalysed reaction is aldehydo-D-ribose 5-phosphate + D-glyceraldehyde 3-phosphate + L-glutamine = pyridoxal 5'-phosphate + L-glutamate + phosphate + 3 H2O + H(+). The enzyme catalyses L-glutamine + H2O = L-glutamate + NH4(+). Its pathway is cofactor biosynthesis; pyridoxal 5'-phosphate biosynthesis. Catalyzes the hydrolysis of glutamine to glutamate and ammonia as part of the biosynthesis of pyridoxal 5'-phosphate. The resulting ammonia molecule is channeled to the active site of PdxS. The sequence is that of Pyridoxal 5'-phosphate synthase subunit Pdx2 from Plasmodium berghei.